A 90-amino-acid polypeptide reads, in one-letter code: Probable Fe(2+)-trafficking protein (90 aa).

It belongs to the Fe(2+)-trafficking protein family.

Functionally, could be a mediator in iron transactions between iron acquisition and iron-requiring processes, such as synthesis and/or repair of Fe-S clusters in biosynthetic enzymes. This is Probable Fe(2+)-trafficking protein from Methylococcus capsulatus (strain ATCC 33009 / NCIMB 11132 / Bath).